Reading from the N-terminus, the 264-residue chain is Hemin import ATP-binding protein HmuV (264 aa).

The ABC transporter domain occupies 2-241 (IEVSGVSVRL…ETMLSVFGLR (240 aa)). 34–41 (GPNGSGKT) is an ATP binding site.

Belongs to the ABC transporter superfamily. Heme (hemin) importer (TC 3.A.1.14.5) family. As to quaternary structure, the complex is composed of two ATP-binding proteins (HmuV), two transmembrane proteins (HmuU) and a solute-binding protein (HmuT).

It localises to the cell inner membrane. Part of the ABC transporter complex HmuTUV involved in hemin import. Responsible for energy coupling to the transport system. This is Hemin import ATP-binding protein HmuV from Rhizobium leguminosarum.